We begin with the raw amino-acid sequence, 111 residues long: Iron-sulfur cluster assembly protein CyaY (111 aa).

It belongs to the frataxin family.

Functionally, involved in iron-sulfur (Fe-S) cluster assembly. May act as a regulator of Fe-S biogenesis. The chain is Iron-sulfur cluster assembly protein CyaY from Cupriavidus necator (strain ATCC 17699 / DSM 428 / KCTC 22496 / NCIMB 10442 / H16 / Stanier 337) (Ralstonia eutropha).